An 82-amino-acid chain; its full sequence is Small ribosomal subunit protein bS16 (82 aa).

It belongs to the bacterial ribosomal protein bS16 family.

The sequence is that of Small ribosomal subunit protein bS16 from Vibrio atlanticus (strain LGP32) (Vibrio splendidus (strain Mel32)).